A 352-amino-acid polypeptide reads, in one-letter code: UDP-N-acetylglucosamine--N-acetylmuramyl-(pentapeptide) pyrophosphoryl-undecaprenol N-acetylglucosamine transferase (352 aa).

Serine 195 and glutamine 287 together coordinate UDP-N-acetyl-alpha-D-glucosamine.

It belongs to the glycosyltransferase 28 family. MurG subfamily.

It is found in the cell membrane. It carries out the reaction Mur2Ac(oyl-L-Ala-gamma-D-Glu-L-Lys-D-Ala-D-Ala)-di-trans,octa-cis-undecaprenyl diphosphate + UDP-N-acetyl-alpha-D-glucosamine = beta-D-GlcNAc-(1-&gt;4)-Mur2Ac(oyl-L-Ala-gamma-D-Glu-L-Lys-D-Ala-D-Ala)-di-trans,octa-cis-undecaprenyl diphosphate + UDP + H(+). It functions in the pathway cell wall biogenesis; peptidoglycan biosynthesis. Cell wall formation. Catalyzes the transfer of a GlcNAc subunit on undecaprenyl-pyrophosphoryl-MurNAc-pentapeptide (lipid intermediate I) to form undecaprenyl-pyrophosphoryl-MurNAc-(pentapeptide)GlcNAc (lipid intermediate II). The chain is UDP-N-acetylglucosamine--N-acetylmuramyl-(pentapeptide) pyrophosphoryl-undecaprenol N-acetylglucosamine transferase from Streptococcus pneumoniae (strain CGSP14).